Reading from the N-terminus, the 1240-residue chain is ABC transporter B family member 15 (1240 aa).

Helical transmembrane passes span 35-55, 82-102, 158-180, 184-206, 264-284, and 296-316; these read MGLG…VLLI, VALL…GYCW, LPNF…ILLW, IVGL…ALIS, GITI…SWYG, and GTVF…GGGL. One can recognise an ABC transmembrane type-1 1 domain in the interval 35–324; it reads MGLGLIGAVG…GLSNLKYFFE (290 aa). Residues 359–595 enclose the ABC transporter 1 domain; that stretch reads VEFKNVKFVY…IDGQYSTLVH (237 aa). ATP is bound at residue 394 to 401; that stretch reads GGSGSGKS. N542, N605, and N622 each carry an N-linked (GlcNAc...) asparagine glycan. Residues 617–646 form a disordered region; it reads SKDIRNSSRVSTLSRSSSANSVTGPSTIKN. Residues 623–639 are compositionally biased toward low complexity; it reads SSRVSTLSRSSSANSVT. N646 carries N-linked (GlcNAc...) asparagine glycosylation. The ABC transmembrane type-1 2 domain maps to 672-960; the sequence is ALYGCISATL…AGSMTTDLAK (289 aa). 2 helical membrane passes run 681–701 and 714–734; these read LFGA…SVYF and IYAL…ISQH. N769 carries an N-linked (GlcNAc...) asparagine glycan. A run of 4 helical transmembrane segments spans residues 794–813, 817–839, 895–915, and 923–943; these read ALVV…GLVI, LALV…RVLL, SWFA…TWAL, and LIQD…ILVS. The ABC transporter 2 domain occupies 995 to 1233; it reads VEFLDVDFSY…GPTGIYFSLV (239 aa). Residue N1015 is glycosylated (N-linked (GlcNAc...) asparagine). Residue 1030–1037 participates in ATP binding; that stretch reads GPSGSGKS.

This sequence belongs to the ABC transporter superfamily. ABCB family. Multidrug resistance exporter (TC 3.A.1.201) subfamily.

It is found in the membrane. The polypeptide is ABC transporter B family member 15 (ABCB15) (Arabidopsis thaliana (Mouse-ear cress)).